The sequence spans 973 residues: NLR family member X1 (973 aa).

The N-terminal 84 residues, 1-84, are a transit peptide targeting the mitochondrion; the sequence is MRWGCHLPRT…EAIQRHRRNL (84 aa). Residues 73–554 are required for interaction with MAVS; the sequence is ATEAIQRHRR…RILPLLFNLL (482 aa). Positions 158 to 481 constitute an NACHT domain; sequence QTVVLYGTVG…LRFFLAPCVE (324 aa). Residue 164–171 coordinates ATP; it reads GTVGTGKS. Positions 554–972 are required for the repression of MAVS-induced interferon signaling; it reads LKVVPRVFGR…TLLEQLGGSG (419 aa). Positions 665-692 constitute an LRRNT domain; it reads RQVLPPSELLDHLFFHYEFQNQRFSAEV. LRR repeat units lie at residues 693-716, 722-745, 747-775, 776-799, 809-832, 833-855, 856-875, and 876-897; these read LGSL…VVAS, RHPL…TLMP, LLRA…LLHD, QCQI…VLMD, HLSL…LDRN, KQLQ…ALAK, AARK…ELSS, and EGRQ…VVAS. Residues 904 to 968 enclose the LRRCT domain; it reads VSEYWSVILS…SEVKTLLEQL (65 aa).

This sequence belongs to the NLRP family. In terms of assembly, homohexamer. Interacts with MAVS. Interacts with TUFM.

It localises to the mitochondrion outer membrane. Functionally, participates in antiviral signaling. Acts as a negative regulator of MAVS-mediated antiviral responses, through the inhibition of the virus-induced RLH (RIG-like helicase)-MAVS interaction. Instead, promotes autophagy by interacting with TUFM and subsequently recruiting the autophagy-related proteins ATG5 and ATG12. Also regulates MAVS-dependent NLRP3 inflammasome activation to attenuate apoptosis. Has no inhibitory function on NF-kappa-B signaling pathway, but enhances NF-kappa-B and JUN N-terminal kinase dependent signaling through the production of reactive oxygen species. Regulates viral mediated-inflammation and energy metabolism in a sex-dependent manner. In females, prevents uncontrolled inflammation and energy metabolism and thus, may contribute to the sex differences observed in infectious and inflammatory diseases. In Rattus norvegicus (Rat), this protein is NLR family member X1 (Nlrx1).